A 427-amino-acid polypeptide reads, in one-letter code: Glutamate-1-semialdehyde 2,1-aminomutase (427 aa).

K264 bears the N6-(pyridoxal phosphate)lysine mark.

The protein belongs to the class-III pyridoxal-phosphate-dependent aminotransferase family. HemL subfamily. As to quaternary structure, homodimer. Pyridoxal 5'-phosphate is required as a cofactor.

Its subcellular location is the cytoplasm. The enzyme catalyses (S)-4-amino-5-oxopentanoate = 5-aminolevulinate. Its pathway is porphyrin-containing compound metabolism; protoporphyrin-IX biosynthesis; 5-aminolevulinate from L-glutamyl-tRNA(Glu): step 2/2. This Clostridium botulinum (strain Eklund 17B / Type B) protein is Glutamate-1-semialdehyde 2,1-aminomutase.